We begin with the raw amino-acid sequence, 295 residues long: MFMSALQLVIVTGMSGAGKTVAVQSFEDLGYFCVDNMPPKLLPKFYELVKESGKITKIALVVDLRSRAFYDEIVEMVRELDENEFNSSRILFLDASDEELVARYKETRRSHPLAMEGRILDGIHLERELLAPIKSNAQIIIDTSKLSPRQLREEIFKNFEARDTKTFHIEVMSFGFKYGLPIDADIVMDVRFLPNPYYVSELRNKTGKDDAVYEYVMKSEKTEEFYQKFVSLLKYVIPGYIAEGKSNVTIAIGCTGGQHRSVALAERIGNELSKEYPVHMSHRDMNKRKETVNRS.

13–20 (GMSGAGKT) is a binding site for ATP. 63–66 (DLRS) provides a ligand contact to GTP.

This sequence belongs to the RapZ-like family.

In terms of biological role, displays ATPase and GTPase activities. This chain is Nucleotide-binding protein LSL_1171, found in Ligilactobacillus salivarius (strain UCC118) (Lactobacillus salivarius).